Here is a 97-residue protein sequence, read N- to C-terminus: Putative pterin-4-alpha-carbinolamine dehydratase (97 aa).

It belongs to the pterin-4-alpha-carbinolamine dehydratase family.

It catalyses the reaction (4aS,6R)-4a-hydroxy-L-erythro-5,6,7,8-tetrahydrobiopterin = (6R)-L-erythro-6,7-dihydrobiopterin + H2O. The sequence is that of Putative pterin-4-alpha-carbinolamine dehydratase from Brucella abortus (strain S19).